Here is a 182-residue protein sequence, read N- to C-terminus: ATP synthase subunit delta (182 aa).

This sequence belongs to the ATPase delta chain family. As to quaternary structure, F-type ATPases have 2 components, F(1) - the catalytic core - and F(0) - the membrane proton channel. F(1) has five subunits: alpha(3), beta(3), gamma(1), delta(1), epsilon(1). CF(0) has four main subunits: a(1), b(1), b'(1) and c(10-14). The alpha and beta chains form an alternating ring which encloses part of the gamma chain. F(1) is attached to F(0) by a central stalk formed by the gamma and epsilon chains, while a peripheral stalk is formed by the delta, b and b' chains.

Its subcellular location is the cellular thylakoid membrane. F(1)F(0) ATP synthase produces ATP from ADP in the presence of a proton or sodium gradient. F-type ATPases consist of two structural domains, F(1) containing the extramembraneous catalytic core and F(0) containing the membrane proton channel, linked together by a central stalk and a peripheral stalk. During catalysis, ATP synthesis in the catalytic domain of F(1) is coupled via a rotary mechanism of the central stalk subunits to proton translocation. Functionally, this protein is part of the stalk that links CF(0) to CF(1). It either transmits conformational changes from CF(0) to CF(1) or is implicated in proton conduction. This chain is ATP synthase subunit delta, found in Synechococcus sp. (strain JA-3-3Ab) (Cyanobacteria bacterium Yellowstone A-Prime).